The primary structure comprises 331 residues: Probable cytosolic iron-sulfur protein assembly protein Ciao1 (331 aa).

WD repeat units lie at residues 12 to 51 (GHKGRIWGVAWHPKGNSFASCGEDKAIRIWSLSGNTWTTK), 57 to 96 (GHKRTIREVRWSPCGEYLASASFDATTAIWSKHECTATLE), 97 to 136 (GHENEVKSVSWSRSGGLLATCSRDKSVWIWEVAGDDEFEC), 142 to 181 (AHSQDVKRVVWHPTKEILASASYDNTIKMYAESALDSDWD), 188 to 227 (SHTSTVWSIDFDADGERLVSCSDDATLKIWRAYHPGNEAG), 246 to 285 (LHTRAIYDVSWCKLTGLIASACGDDAIRIFKESSDSKRDA), and 297 to 331 (AHEQDVNAVEWNPVNVGQLISCSDDGTIKIWKLQE).

The protein belongs to the WD repeat CIA1 family.

Functionally, essential component of the cytosolic iron-sulfur (Fe/S) protein assembly machinery. Required for the maturation of extramitochondrial Fe/S proteins. This Drosophila mojavensis (Fruit fly) protein is Probable cytosolic iron-sulfur protein assembly protein Ciao1.